The chain runs to 787 residues: uncharacterized protein (787 aa).

Residues 1 to 22 form the signal peptide; it reads MKFKYCAIFFSGFLGLSAILAA. The N-palmitoyl cysteine moiety is linked to residue Cys-23. Cys-23 is lipidated: S-diacylglycerol cysteine. Disordered regions lie at residues 178–270 and 473–495; these read SDNV…DNKI and KSKE…KKES. Over residues 181-208 the composition is skewed to polar residues; the sequence is VKVSQRTGETTQKSKVTNPLKINTQNDP. Residues 209–219 show a composition bias toward basic and acidic residues; that stretch reads ATKDLWEKIEA. Low complexity predominate over residues 242 to 261; that stretch reads SSSSSLVNLKQSTDQTTTDD.

The protein belongs to the MG185/MG260 family.

The protein localises to the cell membrane. This is an uncharacterized protein from Mycoplasma pneumoniae (strain ATCC 29342 / M129 / Subtype 1) (Mycoplasmoides pneumoniae).